Reading from the N-terminus, the 795-residue chain is Phenylalanine--tRNA ligase beta subunit (795 aa).

The tRNA-binding domain occupies A39–R148. In terms of domain architecture, B5 spans P401–N476. 4 residues coordinate Mg(2+): D454, D460, E463, and E464. One can recognise an FDX-ACB domain in the interval S701 to R794.

Belongs to the phenylalanyl-tRNA synthetase beta subunit family. Type 1 subfamily. Tetramer of two alpha and two beta subunits. Mg(2+) serves as cofactor.

It localises to the cytoplasm. It carries out the reaction tRNA(Phe) + L-phenylalanine + ATP = L-phenylalanyl-tRNA(Phe) + AMP + diphosphate + H(+). This Pasteurella multocida (strain Pm70) protein is Phenylalanine--tRNA ligase beta subunit (pheT).